A 107-amino-acid polypeptide reads, in one-letter code: Putative regulatory protein BCG9842_A0044 (107 aa).

The protein belongs to the RemA family.

The sequence is that of Putative regulatory protein BCG9842_A0044 from Bacillus cereus (strain G9842).